The primary structure comprises 170 residues: MDLRTFIRDIPDFPEKGIIFRDITPLLKDKEAFKHAIDMLAEKLSEIDFDLIVAPEARGFIFGGALSYKLNKGFIPVRKPGKLPYEVISEKYTLEYGEAELQMHVDSINKGQKVIIFDDVLATGGTAKALKKLVEKAGGEVVAMSFLIELSYLNPRDILKDENIISLIIL.

It belongs to the purine/pyrimidine phosphoribosyltransferase family. As to quaternary structure, homodimer.

The protein resides in the cytoplasm. It carries out the reaction AMP + diphosphate = 5-phospho-alpha-D-ribose 1-diphosphate + adenine. It functions in the pathway purine metabolism; AMP biosynthesis via salvage pathway; AMP from adenine: step 1/1. Catalyzes a salvage reaction resulting in the formation of AMP, that is energically less costly than de novo synthesis. The chain is Adenine phosphoribosyltransferase from Thermosipho africanus (strain TCF52B).